The primary structure comprises 339 residues: MELNERKLNILKAIVKDYIETAEAIGSRTISKRHDLGVSAATIRNEMADLEELGYLIQPHTSAGRVPSEKGYKLYVNSLMSKSELDDNDKILIEQCMNHNINHIKELIHETSKLLSQLTNYTTVAVTKSLINQSVIKHIQLVAMNDNNILLIVVTDKGDLKKANLTTNVYLDQSKLNLISDNLTRKLLGKSITDLDDNLIAFIKYEISEYSGLIDELLNALNSNMKEEDFSLSLNGATNIFSYPEFNDVLKAKSFLNMLEKKETIADIIKSKGIQKDNLNIIIGSDNDCELAQDCSIVTATYNVDRDLVGRISFIGPTRMDYARIYSIINYMSLLINRK.

This sequence belongs to the HrcA family.

Negative regulator of class I heat shock genes (grpE-dnaK-dnaJ and groELS operons). Prevents heat-shock induction of these operons. This Clostridioides difficile (strain 630) (Peptoclostridium difficile) protein is Heat-inducible transcription repressor HrcA.